A 105-amino-acid chain; its full sequence is MSWIILVIAGLLEVVWAVGLKYTHGFSRLTPSVITVTAMIVSLALLAWAMKSLPVGTAYAVWTGIGAVGAAITGIVLLGESANPMRLASLALIVLGIIGLKLSTH.

Residues 1 to 21 form a helical membrane-spanning segment; that stretch reads MSWIILVIAGLLEVVWAVGLK. Residues 22 to 28 lie on the Cytoplasmic side of the membrane; sequence YTHGFSR. Residues 29–49 traverse the membrane as a helical segment; that stretch reads LTPSVITVTAMIVSLALLAWA. Topologically, residues 50 to 57 are periplasmic; that stretch reads MKSLPVGT. The chain crosses the membrane as a helical span at residues 58–78; sequence AYAVWTGIGAVGAAITGIVLL. The Cytoplasmic portion of the chain corresponds to 79–81; the sequence is GES. Residues 82-102 traverse the membrane as a helical segment; the sequence is ANPMRLASLALIVLGIIGLKL. Over 103 to 105 the chain is Periplasmic; that stretch reads STH.

The protein belongs to the drug/metabolite transporter (DMT) superfamily. Small multidrug resistance (SMR) (TC 2.A.7.1) family. Gdx/SugE subfamily.

It localises to the cell inner membrane. Its function is as follows. Guanidinium ion exporter. Couples guanidinium export to the proton motive force, exchanging one guanidinium ion for two protons. The polypeptide is Guanidinium exporter (Escherichia coli O6:H1 (strain CFT073 / ATCC 700928 / UPEC)).